The sequence spans 239 residues: 7-cyano-7-deazaguanine synthase (239 aa).

Residue 8–18 (FSGGLDSTACL) coordinates ATP. The Zn(2+) site is built by cysteine 194, cysteine 209, cysteine 212, and cysteine 215.

Belongs to the QueC family. The cofactor is Zn(2+).

The enzyme catalyses 7-carboxy-7-deazaguanine + NH4(+) + ATP = 7-cyano-7-deazaguanine + ADP + phosphate + H2O + H(+). Its pathway is purine metabolism; 7-cyano-7-deazaguanine biosynthesis. Its function is as follows. Catalyzes the ATP-dependent conversion of 7-carboxy-7-deazaguanine (CDG) to 7-cyano-7-deazaguanine (preQ(0)). In Pyrococcus horikoshii (strain ATCC 700860 / DSM 12428 / JCM 9974 / NBRC 100139 / OT-3), this protein is 7-cyano-7-deazaguanine synthase.